Consider the following 475-residue polypeptide: Ribulose bisphosphate carboxylase large chain (475 aa).

The propeptide occupies 1 to 2 (MS). P3 carries the N-acetylproline modification. Residue K14 is modified to N6,N6,N6-trimethyllysine. Residues N123 and T173 each contribute to the substrate site. Catalysis depends on K175, which acts as the Proton acceptor. Residue K177 participates in substrate binding. K201, D203, and E204 together coordinate Mg(2+). Residue K201 is modified to N6-carboxylysine. The active-site Proton acceptor is the H294. R295, H327, and S379 together coordinate substrate.

Belongs to the RuBisCO large chain family. Type I subfamily. As to quaternary structure, heterohexadecamer of 8 large chains and 8 small chains; disulfide-linked. The disulfide link is formed within the large subunit homodimers. Mg(2+) is required as a cofactor. Post-translationally, the disulfide bond which can form in the large chain dimeric partners within the hexadecamer appears to be associated with oxidative stress and protein turnover.

The protein resides in the plastid. The protein localises to the chloroplast. The catalysed reaction is 2 (2R)-3-phosphoglycerate + 2 H(+) = D-ribulose 1,5-bisphosphate + CO2 + H2O. It catalyses the reaction D-ribulose 1,5-bisphosphate + O2 = 2-phosphoglycolate + (2R)-3-phosphoglycerate + 2 H(+). In terms of biological role, ruBisCO catalyzes two reactions: the carboxylation of D-ribulose 1,5-bisphosphate, the primary event in carbon dioxide fixation, as well as the oxidative fragmentation of the pentose substrate in the photorespiration process. Both reactions occur simultaneously and in competition at the same active site. This chain is Ribulose bisphosphate carboxylase large chain, found in Lotus japonicus (Lotus corniculatus var. japonicus).